A 190-amino-acid chain; its full sequence is Protein GrpE (190 aa).

Residues 1-18 (MTETPNTSSEEIQTSEPS) show a composition bias toward polar residues. Positions 1–21 (MTETPNTSSEEIQTSEPSPDN) are disordered.

The protein belongs to the GrpE family. In terms of assembly, homodimer.

It localises to the cytoplasm. Functionally, participates actively in the response to hyperosmotic and heat shock by preventing the aggregation of stress-denatured proteins, in association with DnaK and GrpE. It is the nucleotide exchange factor for DnaK and may function as a thermosensor. Unfolded proteins bind initially to DnaJ; upon interaction with the DnaJ-bound protein, DnaK hydrolyzes its bound ATP, resulting in the formation of a stable complex. GrpE releases ADP from DnaK; ATP binding to DnaK triggers the release of the substrate protein, thus completing the reaction cycle. Several rounds of ATP-dependent interactions between DnaJ, DnaK and GrpE are required for fully efficient folding. This is Protein GrpE from Chlamydia trachomatis serovar L2 (strain ATCC VR-902B / DSM 19102 / 434/Bu).